Here is a 119-residue protein sequence, read N- to C-terminus: Large ribosomal subunit protein uL18 (119 aa).

It belongs to the universal ribosomal protein uL18 family. In terms of assembly, part of the 50S ribosomal subunit; part of the 5S rRNA/L5/L18/L25 subcomplex. Contacts the 5S and 23S rRNAs.

Functionally, this is one of the proteins that bind and probably mediate the attachment of the 5S RNA into the large ribosomal subunit, where it forms part of the central protuberance. This is Large ribosomal subunit protein uL18 from Clostridium botulinum (strain Okra / Type B1).